Consider the following 95-residue polypeptide: MRKYETIFVAHPSLDEEAVKALIEKFKGVIENGNGTVDNVDFWGKRKLAYEIAKVNEGYYTLINFTANPELPKELDRVFGITDGIIRHIIVKEEQ.

The protein belongs to the bacterial ribosomal protein bS6 family.

In terms of biological role, binds together with bS18 to 16S ribosomal RNA. This is Small ribosomal subunit protein bS6 from Clostridium perfringens (strain ATCC 13124 / DSM 756 / JCM 1290 / NCIMB 6125 / NCTC 8237 / Type A).